We begin with the raw amino-acid sequence, 91 residues long: Large ribosomal subunit protein bL27 (91 aa).

This sequence belongs to the bacterial ribosomal protein bL27 family. As to quaternary structure, part of the 50S ribosomal subunit. Contacts protein L18.

In terms of biological role, binds the 5S and 23S rRNAs and also the tRNA in the P site. This is Large ribosomal subunit protein bL27 (rpmA) from Deinococcus radiodurans (strain ATCC 13939 / DSM 20539 / JCM 16871 / CCUG 27074 / LMG 4051 / NBRC 15346 / NCIMB 9279 / VKM B-1422 / R1).